The chain runs to 380 residues: DNA replication and repair protein RecF (380 aa).

Residue 30–37 participates in ATP binding; it reads GPNGFGKT.

Belongs to the RecF family.

Its subcellular location is the cytoplasm. In terms of biological role, the RecF protein is involved in DNA metabolism; it is required for DNA replication and normal SOS inducibility. RecF binds preferentially to single-stranded, linear DNA. It also seems to bind ATP. In Mycobacterium sp. (strain JLS), this protein is DNA replication and repair protein RecF.